Consider the following 1205-residue polypeptide: A disintegrin and metalloproteinase with thrombospondin motifs 3 (1205 aa).

Positions 1 to 20 (MVLLSLWLIAAALVEVRTSA) are cleaved as a signal peptide. The propeptide occupies 21-249 (DGQAGNEEMV…QLNETMRRRR (229 aa)). Residues Asn83, Asn119, Asn242, and Asn345 are each glycosylated (N-linked (GlcNAc...) asparagine). In terms of domain architecture, Peptidase M12B spans 256 to 460 (YNIEVLLGVD…HSYDCLLDDP (205 aa)). Intrachain disulfides connect Cys333/Cys382, Cys376/Cys455, and Cys415/Cys441. Zn(2+) is bound at residue His398. Glu399 is an active-site residue. Zn(2+) contacts are provided by His402 and His408. The Disintegrin domain occupies 470–550 (ELPGINYSMD…MWKNANQQKQ (81 aa)). Asn475 carries N-linked (GlcNAc...) asparagine glycosylation. Intrachain disulfides connect Cys482-Cys507, Cys493-Cys516, Cys502-Cys535, Cys529-Cys540, Cys563-Cys600, Cys567-Cys605, and Cys578-Cys590. The 56-residue stretch at 551-606 (DGNWGSWTKFGSCSRTCGTGVRFRTRQCNNPMPINGGQDCPGVNFEYQLCNTEECQ) folds into the TSP type-1 1 domain. The segment at 713 to 844 (RTVKGTFTRT…NSNNVIQEEL (132 aa)) is spacer. Residue Asn814 is glycosylated (N-linked (GlcNAc...) asparagine). 3 consecutive TSP type-1 domains span residues 845-905 (DTFE…QECT), 906-965 (HPLW…NRVP), and 966-1014 (CPAQ…QLPP). N-linked (GlcNAc...) asparagine glycosylation occurs at Asn942. Cystine bridges form between Cys978-Cys1010, Cys982-Cys1015, and Cys993-Cys999. The PLAC domain occupies 1015-1054 (CNDEPCLGDKSIFCQMEVLARYCSIPGYNKLCCESCSKRS). The tract at residues 1174-1205 (DSIGASSQARTSKKDGKIIDNRRPTRSSTLER) is disordered. Positions 1185–1205 (SKKDGKIIDNRRPTRSSTLER) are enriched in basic and acidic residues.

Requires Zn(2+) as cofactor. In terms of processing, the precursor is cleaved by a furin endopeptidase. Post-translationally, glycosylated. Can be O-fucosylated by POFUT2 on a serine or a threonine residue found within the consensus sequence C1-X(2)-(S/T)-C2-G of the TSP type-1 repeat domains where C1 and C2 are the first and second cysteine residue of the repeat, respectively. Fucosylated repeats can then be further glycosylated by the addition of a beta-1,3-glucose residue by the glucosyltransferase, B3GALTL. Fucosylation mediates the efficient secretion of ADAMTS family members. Can also be C-glycosylated with one or two mannose molecules on tryptophan residues within the consensus sequence W-X-X-W of the TPRs, and N-glycosylated. These other glycosylations can also facilitate secretion. In terms of tissue distribution, found in cartilage and skin.

It is found in the secreted. Its subcellular location is the extracellular space. The protein localises to the extracellular matrix. Its function is as follows. Cleaves the propeptides of type II collagen prior to fibril assembly. Does not act on types I and III collagens. The chain is A disintegrin and metalloproteinase with thrombospondin motifs 3 (ADAMTS3) from Homo sapiens (Human).